We begin with the raw amino-acid sequence, 456 residues long: tRNA-2-methylthio-N(6)-dimethylallyladenosine synthase (456 aa).

Residues 6-125 (KRLFIKTYGC…LPELIAQAHR (120 aa)) enclose the MTTase N-terminal domain. Residues Cys-15, Cys-51, Cys-88, Cys-163, Cys-167, and Cys-170 each contribute to the [4Fe-4S] cluster site. Residues 149–385 (QVEGYSAFVT…QELLSDQQAA (237 aa)) enclose the Radical SAM core domain. Residues 388 to 450 (ESMIGRTLPV…RNSLSGSLTG (63 aa)) form the TRAM domain.

It belongs to the methylthiotransferase family. MiaB subfamily. As to quaternary structure, monomer. [4Fe-4S] cluster is required as a cofactor.

It localises to the cytoplasm. It catalyses the reaction N(6)-dimethylallyladenosine(37) in tRNA + (sulfur carrier)-SH + AH2 + 2 S-adenosyl-L-methionine = 2-methylsulfanyl-N(6)-dimethylallyladenosine(37) in tRNA + (sulfur carrier)-H + 5'-deoxyadenosine + L-methionine + A + S-adenosyl-L-homocysteine + 2 H(+). Its function is as follows. Catalyzes the methylthiolation of N6-(dimethylallyl)adenosine (i(6)A), leading to the formation of 2-methylthio-N6-(dimethylallyl)adenosine (ms(2)i(6)A) at position 37 in tRNAs that read codons beginning with uridine. This chain is tRNA-2-methylthio-N(6)-dimethylallyladenosine synthase, found in Maricaulis maris (strain MCS10) (Caulobacter maris).